The following is a 247-amino-acid chain: Virulence plasmid protein pGP6-D (247 aa).

It belongs to the UPF0137 (pGP6-D) family.

This Chlamydia trachomatis protein is Virulence plasmid protein pGP6-D.